The chain runs to 419 residues: Prolyl hydroxylase EGLN2 (419 aa).

Composition is skewed to low complexity over residues 1–18 (MDSPCQPQALNQALPQLP) and 64–73 (TTATATTTTA). Disordered stretches follow at residues 1–89 (MDSP…GELW) and 108–181 (AAQG…REEV). Positions 89–134 (WPLQSEGAAALVTKECQRLAAQGARPEAPKRKWAKDGGDAPSPSKR) match the Bipartite nuclear localization signal motif. Over residues 115–126 (EAPKRKWAKDGG) the composition is skewed to basic and acidic residues. Position 130 is a phosphoserine (Ser130). The span at 154–174 (SGASNSSSSSSNTTSSSGEAS) shows a compositional bias: low complexity. A beta(2)beta(3) 'finger-like' loop region spans residues 237–247 (VSQRAIPPRSI). A Fe2OG dioxygenase domain is found at 290–388 (GRTKAMVACY…RYAITVWYFD (99 aa)). Fe cation is bound by residues His309, Asp311, and His370. 2-oxoglutarate is bound at residue Arg379.

In terms of assembly, interacts with E3 ligase SIAH2. Interacts with LIMD1, WTIP and AJUBA. Fe(2+) serves as cofactor. L-ascorbate is required as a cofactor. Post-translationally, ubiquitinated by SIAH1 and/or SIAH2 in response to the unfolded protein response (UPR), leading to its degradation. Highly expressed in testis, expression was also detected in the heart brain, liver kidney and lung. Expression was lowest in spleen and skeletal muscle. Constitutively expressed during differentiation of C2C12 skeletal myocytes.

The protein resides in the nucleus. The catalysed reaction is L-prolyl-[protein] + 2-oxoglutarate + O2 = trans-4-hydroxy-L-prolyl-[protein] + succinate + CO2. It catalyses the reaction L-prolyl-[hypoxia-inducible factor alpha subunit] + 2-oxoglutarate + O2 = trans-4-hydroxy-L-prolyl-[hypoxia-inducible factor alpha subunit] + succinate + CO2. Its function is as follows. Prolyl hydroxylase that mediates hydroxylation of proline residues in target proteins, such as ATF4, IKBKB, CEP192 and HIF1A. Target proteins are preferentially recognized via a LXXLAP motif. Cellular oxygen sensor that catalyzes, under normoxic conditions, the post-translational formation of 4-hydroxyproline in hypoxia-inducible factor (HIF) alpha proteins. Hydroxylates a specific proline found in each of the oxygen-dependent degradation (ODD) domains (N-terminal, NODD, and C-terminal, CODD) of HIF1A. Also hydroxylates HIF2A. Has a preference for the CODD site for both HIF1A and HIF2A. Hydroxylated HIFs are then targeted for proteasomal degradation via the von Hippel-Lindau ubiquitination complex. Under hypoxic conditions, the hydroxylation reaction is attenuated allowing HIFs to escape degradation resulting in their translocation to the nucleus, heterodimerization with HIF1B, and increased expression of hypoxy-inducible genes. EGLN2 is involved in regulating hypoxia tolerance and apoptosis in cardiac and skeletal muscle. Also regulates susceptibility to normoxic oxidative neuronal death. Links oxygen sensing to cell cycle and primary cilia formation by hydroxylating the critical centrosome component CEP192 which promotes its ubiquitination and subsequent proteasomal degradation. Hydroxylates IKBKB, mediating NF-kappa-B activation in hypoxic conditions. Also mediates hydroxylation of ATF4, leading to decreased protein stability of ATF4. The polypeptide is Prolyl hydroxylase EGLN2 (Mus musculus (Mouse)).